Consider the following 274-residue polypeptide: Large ribosomal subunit protein uL2 (274 aa).

Disordered regions lie at residues 34–53 (IAPI…TMRY) and 216–274 (RRPR…RRKK).

This sequence belongs to the universal ribosomal protein uL2 family. As to quaternary structure, part of the 50S ribosomal subunit. Forms a bridge to the 30S subunit in the 70S ribosome.

Its function is as follows. One of the primary rRNA binding proteins. Required for association of the 30S and 50S subunits to form the 70S ribosome, for tRNA binding and peptide bond formation. It has been suggested to have peptidyltransferase activity; this is somewhat controversial. Makes several contacts with the 16S rRNA in the 70S ribosome. The sequence is that of Large ribosomal subunit protein uL2 from Flavobacterium psychrophilum (strain ATCC 49511 / DSM 21280 / CIP 103535 / JIP02/86).